The sequence spans 495 residues: Phage-like element PBSX protein XkdE (495 aa).

It belongs to the phage portal family. PBSX subfamily.

The protein is Phage-like element PBSX protein XkdE (xkdE) of Bacillus subtilis (strain 168).